Consider the following 103-residue polypeptide: Trp operon repressor homolog (103 aa).

A DNA-binding region spans residues 62–85 (QRKISELLGVGVATITRGSNELKH).

This sequence belongs to the TrpR family. As to quaternary structure, homodimer.

It is found in the cytoplasm. Its function is as follows. This protein is an aporepressor. When complexed with L-tryptophan it binds the operator region of the trp operon and prevents the initiation of transcription. This Photobacterium profundum (strain SS9) protein is Trp operon repressor homolog.